The sequence spans 296 residues: Ribosomal RNA small subunit methyltransferase H (296 aa).

Residues 30-32 (GGH), Asp49, Phe76, Asp97, and Gln104 each bind S-adenosyl-L-methionine.

This sequence belongs to the methyltransferase superfamily. RsmH family.

The protein resides in the cytoplasm. It carries out the reaction cytidine(1402) in 16S rRNA + S-adenosyl-L-methionine = N(4)-methylcytidine(1402) in 16S rRNA + S-adenosyl-L-homocysteine + H(+). Its function is as follows. Specifically methylates the N4 position of cytidine in position 1402 (C1402) of 16S rRNA. This is Ribosomal RNA small subunit methyltransferase H from Mesomycoplasma hyopneumoniae (strain 7448) (Mycoplasma hyopneumoniae).